The primary structure comprises 302 residues: Sulfate adenylyltransferase subunit 2 (302 aa).

Belongs to the PAPS reductase family. CysD subfamily. Heterodimer composed of CysD, the smaller subunit, and CysN.

It carries out the reaction sulfate + ATP + H(+) = adenosine 5'-phosphosulfate + diphosphate. The protein operates within sulfur metabolism; hydrogen sulfide biosynthesis; sulfite from sulfate: step 1/3. In terms of biological role, with CysN forms the ATP sulfurylase (ATPS) that catalyzes the adenylation of sulfate producing adenosine 5'-phosphosulfate (APS) and diphosphate, the first enzymatic step in sulfur assimilation pathway. APS synthesis involves the formation of a high-energy phosphoric-sulfuric acid anhydride bond driven by GTP hydrolysis by CysN coupled to ATP hydrolysis by CysD. The sequence is that of Sulfate adenylyltransferase subunit 2 from Shewanella halifaxensis (strain HAW-EB4).